Consider the following 207-residue polypeptide: Large ribosomal subunit protein uL4 (207 aa).

A disordered region spans residues 49–78 (HAVKNRSAVSGGGRKPWRQKGTGRARQGSI).

It belongs to the universal ribosomal protein uL4 family. Part of the 50S ribosomal subunit.

Its function is as follows. One of the primary rRNA binding proteins, this protein initially binds near the 5'-end of the 23S rRNA. It is important during the early stages of 50S assembly. It makes multiple contacts with different domains of the 23S rRNA in the assembled 50S subunit and ribosome. In terms of biological role, forms part of the polypeptide exit tunnel. This Streptococcus gordonii (strain Challis / ATCC 35105 / BCRC 15272 / CH1 / DL1 / V288) protein is Large ribosomal subunit protein uL4.